A 91-amino-acid chain; its full sequence is Alpha-defensin-related sequence 12 (91 aa).

Residues 1–19 (MKKLVLLSAFVLLAFQVQA) form the signal peptide. The propeptide occupies 20–65 (DSIQNTDEEIKTEEQPGEENQAVSISFGDPEGYALQDAAIRRARRC). Repeat copies occupy residues 65-67 (CPP), 68-70 (CPS), 71-73 (CLS), 74-76 (CPW), 77-79 (CPR), and 83-85 (CPM). Residues 65-88 (CPPCPSCLSCPWCPRCLRCPMCKC) form a 6 X 3 AA tandem repeats of C-P-X region.

This sequence belongs to the alpha-defensin family. Paneth cells of the small bowel.

Its subcellular location is the secreted. Functionally, apparent precursor of a secreted, cationic, proline- and cysteine-rich peptide that contains Cys-Pro-Xaa repeats. Unlike cryptdin, the proposed mature peptide region lacks the structural motif characteristic of defensins. It may have microbicidal activities. The polypeptide is Alpha-defensin-related sequence 12 (Defa-rs12) (Mus musculus (Mouse)).